The following is a 443-amino-acid chain: MKEIGALQAEYPLVNKLIATEEVFWINPHIEKYERAIKDSPLNEENVKDAEERLKRFAPYIAKVFPETKGTNGIIESPLVKISSMKEALETTYKQPISGELLLKCDSHLPISGSIKARGGIYEVLKYAEQLALQHGMLTEEDDYSILDSDTCREFFAKHSIAVGSTGNLGLSIGIMSANLGFNVTVHMSADAKEWKKDLLRSKGVNVIEYEDDYSKAVEEGRRQADADPSCYFVDDENSHDLFLGYAVAASRLQKQLEELEVVVDKDHPLFVYLPCGVGGGPGGVAFGLKLLYKDNVHCFFAEPTHSPCMLLGLMTGLHDKIAVQDIGIDNVTDADGLAVGRPSGFVGKTMEPFLSGNYTVSDEELYRLLKELADTENIYLEPSALAGMIGPVKVCKEDEYLQKQQLTEKVKKGTHIVWGTGGSMVPKDVMNEYYRKGLELTV.

Lysine 116 is subject to N6-(pyridoxal phosphate)lysine.

It belongs to the serine/threonine dehydratase family. DsdA subfamily. The cofactor is pyridoxal 5'-phosphate.

The enzyme catalyses D-serine = pyruvate + NH4(+). This is Probable D-serine dehydratase from Bacillus cereus (strain B4264).